A 106-amino-acid polypeptide reads, in one-letter code: Immunoglobulin lambda constant 2 (106 aa).

An Ig-like domain is found at Pro7–Ala101. An intrachain disulfide couples Cys28 to Cys87.

Immunoglobulins are composed of two identical heavy chains and two identical light chains; disulfide-linked.

The protein localises to the secreted. It localises to the cell membrane. Functionally, constant region of immunoglobulin light chains. Immunoglobulins, also known as antibodies, are membrane-bound or secreted glycoproteins produced by B lymphocytes. In the recognition phase of humoral immunity, the membrane-bound immunoglobulins serve as receptors which, upon binding of a specific antigen, trigger the clonal expansion and differentiation of B lymphocytes into immunoglobulins-secreting plasma cells. Secreted immunoglobulins mediate the effector phase of humoral immunity, which results in the elimination of bound antigens. The antigen binding site is formed by the variable domain of one heavy chain, together with that of its associated light chain. Thus, each immunoglobulin has two antigen binding sites with remarkable affinity for a particular antigen. The variable domains are assembled by a process called V-(D)-J rearrangement and can then be subjected to somatic hypermutations which, after exposure to antigen and selection, allow affinity maturation for a particular antigen. The polypeptide is Immunoglobulin lambda constant 2 (Homo sapiens (Human)).